We begin with the raw amino-acid sequence, 790 residues long: B3 domain-containing transcription repressor VAL1 (790 aa).

The disordered stretch occupies residues 234-260; it reads KPSRPAISTPPVASKSAQARIGRPPVE. The segment at residues 295–396 is a DNA-binding region (TF-B3); that stretch reads FEKTLSASDA…KLIMGSRKAA (102 aa). 2 disordered regions span residues 400-429 and 446-468; these read DMQG…SING and NLNS…EKKR. The span at 405-429 shows a compositional bias: polar residues; that stretch reads GLTNGTSTEDTSSSGVTENPPSING. The CW-type zinc-finger motif lies at 538–588; it reads SGEQERWATCDDCSKWRRLPVDALLSFKWTCIDNVWDVSRCSCSAPEESLK. Zn(2+)-binding residues include Cys547, Cys550, Cys568, and Cys580. Residues 685 to 732 adopt a coiled-coil conformation; the sequence is LMMRRKKKQLERDVTAAEDKKKKDMELAESDKSKEEKEVNTARIDLNS. The interval 689–737 is disordered; that stretch reads RKKKQLERDVTAAEDKKKKDMELAESDKSKEEKEVNTARIDLNSDPYNK. The span at 694–724 shows a compositional bias: basic and acidic residues; that stretch reads LERDVTAAEDKKKKDMELAESDKSKEEKEVN.

In terms of assembly, interacts with SNL1. Expressed in flowers and at lower levels in roots, stems and leaves.

It is found in the nucleus. In terms of biological role, transcriptional repressor of gene expression involved in embryonic pathways, such as LEC1, ABI3, and FUS3. Repressor of the sugar-inducible genes involved in the seed maturation program in seedlings. Plays an essential role in regulating the transition from seed maturation to seedling growth. Functionally redundant with VAL2/HSL1. This chain is B3 domain-containing transcription repressor VAL1 (VAL1), found in Arabidopsis thaliana (Mouse-ear cress).